The primary structure comprises 175 residues: Small ribosomal subunit protein uS5 (175 aa).

Residues 11–74 (LSEVLVDVNR…QAAKKRMMKV (64 aa)) form the S5 DRBM domain.

Belongs to the universal ribosomal protein uS5 family. Part of the 30S ribosomal subunit. Contacts proteins S4 and S8.

In terms of biological role, with S4 and S12 plays an important role in translational accuracy. Located at the back of the 30S subunit body where it stabilizes the conformation of the head with respect to the body. This is Small ribosomal subunit protein uS5 from Rickettsia typhi (strain ATCC VR-144 / Wilmington).